Consider the following 341-residue polypeptide: Holliday junction branch migration complex subunit RuvB (341 aa).

A disordered region spans residues 1 to 21 (MSQPDPMLRPEPLESDGEDRA). Residues 4-183 (PDPMLRPEPL…FGIPTRLQFY (180 aa)) are large ATPase domain (RuvB-L). ATP contacts are provided by residues Leu22, Arg23, Gly64, Lys67, Thr68, Thr69, 130–132 (EDF), Arg173, Tyr183, and Arg220. Thr68 serves as a coordination point for Mg(2+). A small ATPAse domain (RuvB-S) region spans residues 184 to 254 (TIEELDLIVT…IADSALTRLG (71 aa)). The tract at residues 257–341 (HLGLDTADRR…PRTQESLFDE (85 aa)) is head domain (RuvB-H). Arg293, Arg312, and Arg317 together coordinate DNA.

It belongs to the RuvB family. Homohexamer. Forms an RuvA(8)-RuvB(12)-Holliday junction (HJ) complex. HJ DNA is sandwiched between 2 RuvA tetramers; dsDNA enters through RuvA and exits via RuvB. An RuvB hexamer assembles on each DNA strand where it exits the tetramer. Each RuvB hexamer is contacted by two RuvA subunits (via domain III) on 2 adjacent RuvB subunits; this complex drives branch migration. In the full resolvosome a probable DNA-RuvA(4)-RuvB(12)-RuvC(2) complex forms which resolves the HJ.

Its subcellular location is the cytoplasm. The catalysed reaction is ATP + H2O = ADP + phosphate + H(+). The RuvA-RuvB-RuvC complex processes Holliday junction (HJ) DNA during genetic recombination and DNA repair, while the RuvA-RuvB complex plays an important role in the rescue of blocked DNA replication forks via replication fork reversal (RFR). RuvA specifically binds to HJ cruciform DNA, conferring on it an open structure. The RuvB hexamer acts as an ATP-dependent pump, pulling dsDNA into and through the RuvAB complex. RuvB forms 2 homohexamers on either side of HJ DNA bound by 1 or 2 RuvA tetramers; 4 subunits per hexamer contact DNA at a time. Coordinated motions by a converter formed by DNA-disengaged RuvB subunits stimulates ATP hydrolysis and nucleotide exchange. Immobilization of the converter enables RuvB to convert the ATP-contained energy into a lever motion, pulling 2 nucleotides of DNA out of the RuvA tetramer per ATP hydrolyzed, thus driving DNA branch migration. The RuvB motors rotate together with the DNA substrate, which together with the progressing nucleotide cycle form the mechanistic basis for DNA recombination by continuous HJ branch migration. Branch migration allows RuvC to scan DNA until it finds its consensus sequence, where it cleaves and resolves cruciform DNA. This is Holliday junction branch migration complex subunit RuvB from Paracoccus denitrificans (strain Pd 1222).